The chain runs to 314 residues: Acetyl-coenzyme A carboxylase carboxyl transferase subunit alpha (314 aa).

The CoA carboxyltransferase C-terminal domain occupies 32–289 (EIDMLEASLE…KSAFVAQLDS (258 aa)).

It belongs to the AccA family. In terms of assembly, acetyl-CoA carboxylase is a heterohexamer composed of biotin carboxyl carrier protein (AccB), biotin carboxylase (AccC) and two subunits each of ACCase subunit alpha (AccA) and ACCase subunit beta (AccD).

Its subcellular location is the cytoplasm. It catalyses the reaction N(6)-carboxybiotinyl-L-lysyl-[protein] + acetyl-CoA = N(6)-biotinyl-L-lysyl-[protein] + malonyl-CoA. Its pathway is lipid metabolism; malonyl-CoA biosynthesis; malonyl-CoA from acetyl-CoA: step 1/1. Component of the acetyl coenzyme A carboxylase (ACC) complex. First, biotin carboxylase catalyzes the carboxylation of biotin on its carrier protein (BCCP) and then the CO(2) group is transferred by the carboxyltransferase to acetyl-CoA to form malonyl-CoA. The sequence is that of Acetyl-coenzyme A carboxylase carboxyl transferase subunit alpha from Staphylococcus aureus (strain NCTC 8325 / PS 47).